Reading from the N-terminus, the 189-residue chain is Recombination protein RecR (189 aa).

A C4-type zinc finger spans residues 48 to 63; the sequence is CQTCFHLSAEPLCDIC. The 95-residue stretch at 71 to 165 folds into the Toprim domain; the sequence is QLLCVVADSR…QVSRIAYGLP (95 aa).

This sequence belongs to the RecR family.

May play a role in DNA repair. It seems to be involved in an RecBC-independent recombinational process of DNA repair. It may act with RecF and RecO. The chain is Recombination protein RecR from Prochlorococcus marinus (strain MIT 9303).